A 201-amino-acid polypeptide reads, in one-letter code: 3-isopropylmalate dehydratase small subunit (201 aa).

Belongs to the LeuD family. LeuD type 1 subfamily. As to quaternary structure, heterodimer of LeuC and LeuD.

It catalyses the reaction (2R,3S)-3-isopropylmalate = (2S)-2-isopropylmalate. It participates in amino-acid biosynthesis; L-leucine biosynthesis; L-leucine from 3-methyl-2-oxobutanoate: step 2/4. Functionally, catalyzes the isomerization between 2-isopropylmalate and 3-isopropylmalate, via the formation of 2-isopropylmaleate. This is 3-isopropylmalate dehydratase small subunit from Nitrobacter hamburgensis (strain DSM 10229 / NCIMB 13809 / X14).